A 760-amino-acid polypeptide reads, in one-letter code: Metal transporter cnnm-2 (760 aa).

The signal sequence occupies residues 1–21; sequence MIIKVFLRLLLLCAHIVCIDG. Residues 22 to 153 are Extracellular-facing; it reads KLEIRPVVSG…ETFMPVWAQC (132 aa). A glycan (N-linked (GlcNAc...) asparagine) is linked at Asn-88. The 179-residue stretch at 145-323 folds into the CNNM transmembrane domain; sequence TFMPVWAQCA…MENDACDIDL (179 aa). Residues 154–174 traverse the membrane as a helical segment; the sequence is AILCLLFSISALCSGLTLGLM. Topologically, residues 175 to 208 are cytoplasmic; sequence ALTPQELSILMKSGSQREKKHAAAIYPIRCHGNR. Residues 209–229 form a helical membrane-spanning segment; the sequence is LLCTVIIMNVIVNTGITLLFD. A topological domain (extracellular) is located at residue Asp-230. A helical transmembrane segment spans residues 231-251; that stretch reads LAEGLIAFVASTVGIVVFGEI. Residues 252–261 are Cytoplasmic-facing; the sequence is LPQSICVKYG. The helical transmembrane segment at 262-282 threads the bilayer; it reads LAVGANTIFITKFFMFLLFPI. The Extracellular segment spans residues 283–760; it reads TWPLGKILDK…SVEELKPLME (478 aa). 2 N-linked (GlcNAc...) asparagine glycosylation sites follow: Asn-302 and Asn-403. 2 consecutive CBS domains span residues 344–406 and 442–512; these read MTDI…NITV and MVAK…ITDE. N-linked (GlcNAc...) asparagine glycosylation is found at Asn-528, Asn-592, and Asn-667. The segment at 708–734 is disordered; sequence DDFGSPTRKASILDSSPNSRKRSSTSV.

It belongs to the ACDP family.

It is found in the cell membrane. Functionally, probable metal transporter. Probably acts redundantly with the other metal transport proteins cnnm-1, cnnm-3, cnnm-4 and cnnm-5 to regulate Mg(2+) homeostasis. This chain is Metal transporter cnnm-2, found in Caenorhabditis elegans.